The following is a 610-amino-acid chain: ABC transporter ATP-binding protein/permease wht-3 (610 aa).

An ABC transporter domain is found at 42–277 (VKTRKKLFSK…FADCGHPIPK (236 aa)). 74–81 (GASGAGKT) contributes to the ATP binding site. The next 5 helical transmembrane spans lie at 396 to 416 (ALYFLIAELTFSTMFGIMTFM), 446 to 466 (LPLFTIDGALMIVISYWMIGL), 477 to 497 (ILISVLVEQSATSCGLFLACL), 503 to 523 (LAIAFAVPASGLFALLSGLYG), and 584 to 604 (VIGLCSIVIFFYLAGYIALFI).

Belongs to the ABC transporter superfamily. ABCG family. Eye pigment precursor importer (TC 3.A.1.204) subfamily.

It localises to the membrane. Required for efficient RNA interference (RNAi) of pop-1 indicating a role in the germline development. In Caenorhabditis elegans, this protein is ABC transporter ATP-binding protein/permease wht-3 (wht-3).